The sequence spans 310 residues: Methionyl-tRNA formyltransferase (310 aa).

Residue 108-111 (SLLP) coordinates (6S)-5,6,7,8-tetrahydrofolate.

The protein belongs to the Fmt family.

The catalysed reaction is L-methionyl-tRNA(fMet) + (6R)-10-formyltetrahydrofolate = N-formyl-L-methionyl-tRNA(fMet) + (6S)-5,6,7,8-tetrahydrofolate + H(+). Its function is as follows. Attaches a formyl group to the free amino group of methionyl-tRNA(fMet). The formyl group appears to play a dual role in the initiator identity of N-formylmethionyl-tRNA by promoting its recognition by IF2 and preventing the misappropriation of this tRNA by the elongation apparatus. The protein is Methionyl-tRNA formyltransferase of Fusobacterium nucleatum subsp. nucleatum (strain ATCC 25586 / DSM 15643 / BCRC 10681 / CIP 101130 / JCM 8532 / KCTC 2640 / LMG 13131 / VPI 4355).